The following is a 528-amino-acid chain: Na(+)/H(+) antiporter NhaB (528 aa).

10 consecutive transmembrane segments (helical) span residues 20 to 39 (WFKI…FYFN), 66 to 86 (PGGL…SQVL), 97 to 117 (LLLV…LFVF), 139 to 159 (AFLS…TVAV), 241 to 261 (IRMS…CFLV), 304 to 324 (AVIG…VGLI), 349 to 369 (EEAL…AVII), 390 to 410 (LVIF…VFVG), 448 to 468 (ATPN…APLI), and 476 to 496 (VWMA…AIQL).

This sequence belongs to the NhaB Na(+)/H(+) (TC 2.A.34) antiporter family.

The protein resides in the cell inner membrane. It carries out the reaction 2 Na(+)(in) + 3 H(+)(out) = 2 Na(+)(out) + 3 H(+)(in). Na(+)/H(+) antiporter that extrudes sodium in exchange for external protons. The polypeptide is Na(+)/H(+) antiporter NhaB (Shewanella pealeana (strain ATCC 700345 / ANG-SQ1)).